Consider the following 348-residue polypeptide: Protein RecA (348 aa).

64-71 (GPESSGKT) provides a ligand contact to ATP. A disordered region spans residues 328-348 (DTGGAAPAQEDEAQAQEELEF). A compositionally biased stretch (acidic residues) spans 336–348 (QEDEAQAQEELEF).

The protein belongs to the RecA family.

The protein localises to the cytoplasm. Functionally, can catalyze the hydrolysis of ATP in the presence of single-stranded DNA, the ATP-dependent uptake of single-stranded DNA by duplex DNA, and the ATP-dependent hybridization of homologous single-stranded DNAs. It interacts with LexA causing its activation and leading to its autocatalytic cleavage. The polypeptide is Protein RecA (Bacillus licheniformis (strain ATCC 14580 / DSM 13 / JCM 2505 / CCUG 7422 / NBRC 12200 / NCIMB 9375 / NCTC 10341 / NRRL NRS-1264 / Gibson 46)).